The sequence spans 498 residues: Glutamyl-tRNA(Gln) amidotransferase subunit A (498 aa).

Active-site charge relay system residues include Lys79 and Ser154. Residue Ser178 is the Acyl-ester intermediate of the active site.

The protein belongs to the amidase family. GatA subfamily. In terms of assembly, heterotrimer of A, B and C subunits.

It catalyses the reaction L-glutamyl-tRNA(Gln) + L-glutamine + ATP + H2O = L-glutaminyl-tRNA(Gln) + L-glutamate + ADP + phosphate + H(+). Its function is as follows. Allows the formation of correctly charged Gln-tRNA(Gln) through the transamidation of misacylated Glu-tRNA(Gln) in organisms which lack glutaminyl-tRNA synthetase. The reaction takes place in the presence of glutamine and ATP through an activated gamma-phospho-Glu-tRNA(Gln). The chain is Glutamyl-tRNA(Gln) amidotransferase subunit A from Psychrobacter cryohalolentis (strain ATCC BAA-1226 / DSM 17306 / VKM B-2378 / K5).